Consider the following 204-residue polypeptide: CASP-like protein 1B2 (204 aa).

Over Met1–Gln28 the chain is Cytoplasmic. A helical membrane pass occupies residues Ile29–Gly49. The Extracellular segment spans residues Leu50–Ala80. A helical membrane pass occupies residues Phe81–Val101. At Asp102 to Arg114 the chain is on the cytoplasmic side. A helical transmembrane segment spans residues Leu115–Ser135. The Extracellular segment spans residues Ala136–Gly168. The chain crosses the membrane as a helical span at residues Ala169 to Ile189. Residues Thr190 to Pro204 lie on the Cytoplasmic side of the membrane.

It belongs to the Casparian strip membrane proteins (CASP) family. Homodimer and heterodimers.

Its subcellular location is the cell membrane. In Vitis vinifera (Grape), this protein is CASP-like protein 1B2.